Consider the following 424-residue polypeptide: Serine--tRNA ligase (424 aa).

229-231 contributes to the L-serine binding site; that stretch reads TAE. ATP is bound by residues 260 to 262 and V276; that span reads RTE. E283 serves as a coordination point for L-serine. Position 347-350 (347-350) interacts with ATP; that stretch reads EVTS. T382 contacts L-serine.

Belongs to the class-II aminoacyl-tRNA synthetase family. Type-1 seryl-tRNA synthetase subfamily. In terms of assembly, homodimer. The tRNA molecule binds across the dimer.

It localises to the cytoplasm. It catalyses the reaction tRNA(Ser) + L-serine + ATP = L-seryl-tRNA(Ser) + AMP + diphosphate + H(+). The enzyme catalyses tRNA(Sec) + L-serine + ATP = L-seryl-tRNA(Sec) + AMP + diphosphate + H(+). It participates in aminoacyl-tRNA biosynthesis; selenocysteinyl-tRNA(Sec) biosynthesis; L-seryl-tRNA(Sec) from L-serine and tRNA(Sec): step 1/1. Its function is as follows. Catalyzes the attachment of serine to tRNA(Ser). Is also able to aminoacylate tRNA(Sec) with serine, to form the misacylated tRNA L-seryl-tRNA(Sec), which will be further converted into selenocysteinyl-tRNA(Sec). The chain is Serine--tRNA ligase from Rubrobacter xylanophilus (strain DSM 9941 / JCM 11954 / NBRC 16129 / PRD-1).